We begin with the raw amino-acid sequence, 368 residues long: Phosphate acyltransferase (368 aa).

The tract at residues 337-368 (LGEGEHNAGGAGHASPAAGHHAEPSAAQSSKA) is disordered. Positions 349 to 368 (HASPAAGHHAEPSAAQSSKA) are enriched in low complexity.

It belongs to the PlsX family. In terms of assembly, homodimer. Probably interacts with PlsY.

It localises to the cytoplasm. The catalysed reaction is a fatty acyl-[ACP] + phosphate = an acyl phosphate + holo-[ACP]. Its pathway is lipid metabolism; phospholipid metabolism. In terms of biological role, catalyzes the reversible formation of acyl-phosphate (acyl-PO(4)) from acyl-[acyl-carrier-protein] (acyl-ACP). This enzyme utilizes acyl-ACP as fatty acyl donor, but not acyl-CoA. This Burkholderia lata (strain ATCC 17760 / DSM 23089 / LMG 22485 / NCIMB 9086 / R18194 / 383) protein is Phosphate acyltransferase.